A 277-amino-acid polypeptide reads, in one-letter code: Glutamate racemase (277 aa).

Substrate is bound by residues 13-14 and 45-46; these read DS and YG. The active-site Proton donor/acceptor is the C77. 78–79 provides a ligand contact to substrate; sequence NT. C192 acts as the Proton donor/acceptor in catalysis. Substrate is bound at residue 193 to 194; the sequence is TH.

Belongs to the aspartate/glutamate racemases family.

It carries out the reaction L-glutamate = D-glutamate. The protein operates within cell wall biogenesis; peptidoglycan biosynthesis. Functionally, provides the (R)-glutamate required for cell wall biosynthesis. In Rhizobium meliloti (strain 1021) (Ensifer meliloti), this protein is Glutamate racemase.